The sequence spans 353 residues: Protein RecA (353 aa).

67–74 (GPESSGKT) is a binding site for ATP. A disordered region spans residues 330–353 (SNPNSTPDFSVDDSEGVAETNEDF). Residues 339-353 (SVDDSEGVAETNEDF) show a composition bias toward acidic residues.

The protein belongs to the RecA family.

It is found in the cytoplasm. Can catalyze the hydrolysis of ATP in the presence of single-stranded DNA, the ATP-dependent uptake of single-stranded DNA by duplex DNA, and the ATP-dependent hybridization of homologous single-stranded DNAs. It interacts with LexA causing its activation and leading to its autocatalytic cleavage. The polypeptide is Protein RecA (Escherichia coli O157:H7 (strain EC4115 / EHEC)).